A 445-amino-acid chain; its full sequence is tRNA(Ile)-lysidine synthase (445 aa).

19-24 is a binding site for ATP; that stretch reads SGGIDS.

It belongs to the tRNA(Ile)-lysidine synthase family.

It localises to the cytoplasm. It catalyses the reaction cytidine(34) in tRNA(Ile2) + L-lysine + ATP = lysidine(34) in tRNA(Ile2) + AMP + diphosphate + H(+). In terms of biological role, ligates lysine onto the cytidine present at position 34 of the AUA codon-specific tRNA(Ile) that contains the anticodon CAU, in an ATP-dependent manner. Cytidine is converted to lysidine, thus changing the amino acid specificity of the tRNA from methionine to isoleucine. The chain is tRNA(Ile)-lysidine synthase from Buchnera aphidicola subsp. Schizaphis graminum (strain Sg).